Consider the following 262-residue polypeptide: Acyl-[acyl-carrier-protein]--UDP-N-acetylglucosamine O-acyltransferase (262 aa).

Belongs to the transferase hexapeptide repeat family. LpxA subfamily. In terms of assembly, homotrimer.

The protein resides in the cytoplasm. The enzyme catalyses a (3R)-hydroxyacyl-[ACP] + UDP-N-acetyl-alpha-D-glucosamine = a UDP-3-O-[(3R)-3-hydroxyacyl]-N-acetyl-alpha-D-glucosamine + holo-[ACP]. It participates in glycolipid biosynthesis; lipid IV(A) biosynthesis; lipid IV(A) from (3R)-3-hydroxytetradecanoyl-[acyl-carrier-protein] and UDP-N-acetyl-alpha-D-glucosamine: step 1/6. Its function is as follows. Involved in the biosynthesis of lipid A, a phosphorylated glycolipid that anchors the lipopolysaccharide to the outer membrane of the cell. The polypeptide is Acyl-[acyl-carrier-protein]--UDP-N-acetylglucosamine O-acyltransferase (Sodalis glossinidius (strain morsitans)).